The chain runs to 128 residues: Glycine cleavage system H protein (128 aa).

The Lipoyl-binding domain maps to 24 to 106; that stretch reads VATVGITAFA…YNNGWLLKIK (83 aa). Position 65 is an N6-lipoyllysine (K65).

This sequence belongs to the GcvH family. As to quaternary structure, the glycine cleavage system is composed of four proteins: P, T, L and H. The cofactor is (R)-lipoate.

In terms of biological role, the glycine cleavage system catalyzes the degradation of glycine. The H protein shuttles the methylamine group of glycine from the P protein to the T protein. In Acaryochloris marina (strain MBIC 11017), this protein is Glycine cleavage system H protein.